The sequence spans 125 residues: Immunoglobulin heavy variable 4-39 (125 aa).

Residues M1–S26 form the signal peptide. The interval Q27–S51 is framework-1. The region spanning Q27–R125 is the Ig-like domain. C48 and C123 are joined by a disulfide. Residues G52–Y61 form a complementarity-determining-1 region. Residues W62 to S78 form a framework-2 region. Residues I79–T85 are complementarity-determining-2. The tract at residues Y86–C123 is framework-3. Residues A124–R125 are complementarity-determining-3.

In terms of assembly, immunoglobulins are composed of two identical heavy chains and two identical light chains; disulfide-linked.

It is found in the secreted. The protein localises to the cell membrane. Its function is as follows. V region of the variable domain of immunoglobulin heavy chains that participates in the antigen recognition. Immunoglobulins, also known as antibodies, are membrane-bound or secreted glycoproteins produced by B lymphocytes. In the recognition phase of humoral immunity, the membrane-bound immunoglobulins serve as receptors which, upon binding of a specific antigen, trigger the clonal expansion and differentiation of B lymphocytes into immunoglobulins-secreting plasma cells. Secreted immunoglobulins mediate the effector phase of humoral immunity, which results in the elimination of bound antigens. The antigen binding site is formed by the variable domain of one heavy chain, together with that of its associated light chain. Thus, each immunoglobulin has two antigen binding sites with remarkable affinity for a particular antigen. The variable domains are assembled by a process called V-(D)-J rearrangement and can then be subjected to somatic hypermutations which, after exposure to antigen and selection, allow affinity maturation for a particular antigen. This Homo sapiens (Human) protein is Immunoglobulin heavy variable 4-39.